Consider the following 354-residue polypeptide: 3-dehydroquinate synthase (354 aa).

Residues 100–104, 124–125, Lys136, Lys145, and 163–166 contribute to the NAD(+) site; these read GATGD, TT, and FLAT. Residues Glu178, His242, and His256 each coordinate Zn(2+).

It belongs to the sugar phosphate cyclases superfamily. Dehydroquinate synthase family. It depends on Co(2+) as a cofactor. The cofactor is Zn(2+). NAD(+) serves as cofactor.

It localises to the cytoplasm. The enzyme catalyses 7-phospho-2-dehydro-3-deoxy-D-arabino-heptonate = 3-dehydroquinate + phosphate. It participates in metabolic intermediate biosynthesis; chorismate biosynthesis; chorismate from D-erythrose 4-phosphate and phosphoenolpyruvate: step 2/7. Catalyzes the conversion of 3-deoxy-D-arabino-heptulosonate 7-phosphate (DAHP) to dehydroquinate (DHQ). The protein is 3-dehydroquinate synthase of Staphylococcus haemolyticus (strain JCSC1435).